Reading from the N-terminus, the 96-residue chain is UPF0235 protein Tola_0962 (96 aa).

It belongs to the UPF0235 family.

The protein is UPF0235 protein Tola_0962 of Tolumonas auensis (strain DSM 9187 / NBRC 110442 / TA 4).